The following is a 448-amino-acid chain: Probable glycine dehydrogenase (decarboxylating) subunit 1 (448 aa).

The protein belongs to the GcvP family. N-terminal subunit subfamily. In terms of assembly, the glycine cleavage system is composed of four proteins: P, T, L and H. In this organism, the P 'protein' is a heterodimer of two subunits.

The catalysed reaction is N(6)-[(R)-lipoyl]-L-lysyl-[glycine-cleavage complex H protein] + glycine + H(+) = N(6)-[(R)-S(8)-aminomethyldihydrolipoyl]-L-lysyl-[glycine-cleavage complex H protein] + CO2. In terms of biological role, the glycine cleavage system catalyzes the degradation of glycine. The P protein binds the alpha-amino group of glycine through its pyridoxal phosphate cofactor; CO(2) is released and the remaining methylamine moiety is then transferred to the lipoamide cofactor of the H protein. This Geobacillus thermodenitrificans (strain NG80-2) protein is Probable glycine dehydrogenase (decarboxylating) subunit 1.